Here is a 508-residue protein sequence, read N- to C-terminus: GMP synthase [glutamine-hydrolyzing] (508 aa).

The region spanning 1–189 (MILVLDFGSQ…ALLVCGCEKT (189 aa)) is the Glutamine amidotransferase type-1 domain. Cysteine 78 acts as the Nucleophile in catalysis. Residues histidine 163 and glutamate 165 contribute to the active site. The GMPS ATP-PPase domain occupies 190–383 (WGMQHFAQRE…LGVSQDFLMR (194 aa)). Residue 217-223 (SGGVDST) coordinates ATP.

Homodimer.

The enzyme catalyses XMP + L-glutamine + ATP + H2O = GMP + L-glutamate + AMP + diphosphate + 2 H(+). It participates in purine metabolism; GMP biosynthesis; GMP from XMP (L-Gln route): step 1/1. Functionally, catalyzes the synthesis of GMP from XMP. In Helicobacter pylori (strain J99 / ATCC 700824) (Campylobacter pylori J99), this protein is GMP synthase [glutamine-hydrolyzing] (guaA).